A 295-amino-acid polypeptide reads, in one-letter code: Malonyl-[acyl-carrier protein] O-methyltransferase (295 aa).

Belongs to the methyltransferase superfamily.

It catalyses the reaction malonyl-[ACP] + S-adenosyl-L-methionine = malonyl-[ACP] methyl ester + S-adenosyl-L-homocysteine. It participates in cofactor biosynthesis; biotin biosynthesis. Functionally, converts the free carboxyl group of a malonyl-thioester to its methyl ester by transfer of a methyl group from S-adenosyl-L-methionine (SAM). It allows to synthesize pimeloyl-ACP via the fatty acid synthetic pathway. This chain is Malonyl-[acyl-carrier protein] O-methyltransferase, found in Halorhodospira halophila (strain DSM 244 / SL1) (Ectothiorhodospira halophila (strain DSM 244 / SL1)).